Here is a 179-residue protein sequence, read N- to C-terminus: Riboflavin kinase (179 aa).

61–66 is a CDP binding site; sequence GDGEGR. Residues Thr90 and Asn92 each coordinate Mg(2+). FMN contacts are provided by Thr147 and Glu155. 160 to 163 provides a ligand contact to CDP; the sequence is VELR.

This sequence belongs to the archaeal riboflavin kinase family. It depends on Mg(2+) as a cofactor.

It catalyses the reaction riboflavin + CTP = CDP + FMN + H(+). The protein operates within cofactor biosynthesis; FMN biosynthesis; FMN from riboflavin (CTP route): step 1/1. In terms of biological role, catalyzes the CTP-dependent phosphorylation of riboflavin (vitamin B2) to form flavin mononucleotide (FMN). The chain is Riboflavin kinase from Ignicoccus hospitalis (strain KIN4/I / DSM 18386 / JCM 14125).